Here is a 261-residue protein sequence, read N- to C-terminus: Cytochrome c oxidase subunit 3 (261 aa).

Topologically, residues 1–15 (MTHQTHAYHMVNPSP) are mitochondrial matrix. The helical transmembrane segment at 16–34 (WPLTGALSALLMTSGLIMW) threads the bilayer. Residues 35–40 (FHFNST) lie on the Mitochondrial intermembrane side of the membrane. A helical membrane pass occupies residues 41-66 (ALLMLGLTTNMLTMYQWWRDIVREST). Topologically, residues 67-72 (FQGHHT) are mitochondrial matrix. The helical transmembrane segment at 73–105 (PTVQKGLRYGMILFIISEVLFFTGFFWAFYHSS) threads the bilayer. The Mitochondrial intermembrane segment spans residues 106–128 (LAPTPELGGCWPPTGIHPLNPLE). A helical membrane pass occupies residues 129–152 (VPLLNTSVLLASGVSITWAHHSLM). The Mitochondrial matrix portion of the chain corresponds to 153–155 (EGN). The helical transmembrane segment at 156–183 (RNHMLQALFITIALGVYFTLLQASEYYE) threads the bilayer. Topologically, residues 184–190 (APFTISD) are mitochondrial intermembrane. The chain crosses the membrane as a helical span at residues 191–223 (GVYGSTFFVATGFHGLHVIIGSTFLIVCFFRQL). Residues 224 to 232 (KFHFTSNHH) lie on the Mitochondrial matrix side of the membrane. The chain crosses the membrane as a helical span at residues 233 to 256 (FGFEAAAWYWHFVDVVWLFLYVSI). Residues 257-261 (YWWGS) lie on the Mitochondrial intermembrane side of the membrane.

It belongs to the cytochrome c oxidase subunit 3 family. In terms of assembly, component of the cytochrome c oxidase (complex IV, CIV), a multisubunit enzyme composed of 14 subunits. The complex is composed of a catalytic core of 3 subunits MT-CO1, MT-CO2 and MT-CO3, encoded in the mitochondrial DNA, and 11 supernumerary subunits COX4I, COX5A, COX5B, COX6A, COX6B, COX6C, COX7A, COX7B, COX7C, COX8 and NDUFA4, which are encoded in the nuclear genome. The complex exists as a monomer or a dimer and forms supercomplexes (SCs) in the inner mitochondrial membrane with NADH-ubiquinone oxidoreductase (complex I, CI) and ubiquinol-cytochrome c oxidoreductase (cytochrome b-c1 complex, complex III, CIII), resulting in different assemblies (supercomplex SCI(1)III(2)IV(1) and megacomplex MCI(2)III(2)IV(2)).

It localises to the mitochondrion inner membrane. It catalyses the reaction 4 Fe(II)-[cytochrome c] + O2 + 8 H(+)(in) = 4 Fe(III)-[cytochrome c] + 2 H2O + 4 H(+)(out). Functionally, component of the cytochrome c oxidase, the last enzyme in the mitochondrial electron transport chain which drives oxidative phosphorylation. The respiratory chain contains 3 multisubunit complexes succinate dehydrogenase (complex II, CII), ubiquinol-cytochrome c oxidoreductase (cytochrome b-c1 complex, complex III, CIII) and cytochrome c oxidase (complex IV, CIV), that cooperate to transfer electrons derived from NADH and succinate to molecular oxygen, creating an electrochemical gradient over the inner membrane that drives transmembrane transport and the ATP synthase. Cytochrome c oxidase is the component of the respiratory chain that catalyzes the reduction of oxygen to water. Electrons originating from reduced cytochrome c in the intermembrane space (IMS) are transferred via the dinuclear copper A center (CU(A)) of subunit 2 and heme A of subunit 1 to the active site in subunit 1, a binuclear center (BNC) formed by heme A3 and copper B (CU(B)). The BNC reduces molecular oxygen to 2 water molecules using 4 electrons from cytochrome c in the IMS and 4 protons from the mitochondrial matrix. The protein is Cytochrome c oxidase subunit 3 (MT-CO3) of Cephalophorus natalensis (Natal red duiker).